Reading from the N-terminus, the 419-residue chain is Tyrosine--tRNA ligase (419 aa).

An L-tyrosine-binding site is contributed by Tyr42. A 'HIGH' region motif is present at residues 47–56; the sequence is ATAPSLHVGS. 2 residues coordinate L-tyrosine: Tyr179 and Gln183. Residues 239 to 243 carry the 'KMSKS' region motif; that stretch reads KMGKT. Residue Lys242 participates in ATP binding. An S4 RNA-binding domain is found at 353–418; it reads VVLAALFADA…GKKKIVLVKP (66 aa).

This sequence belongs to the class-I aminoacyl-tRNA synthetase family. TyrS type 1 subfamily. In terms of assembly, homodimer.

It is found in the cytoplasm. It catalyses the reaction tRNA(Tyr) + L-tyrosine + ATP = L-tyrosyl-tRNA(Tyr) + AMP + diphosphate + H(+). In terms of biological role, catalyzes the attachment of tyrosine to tRNA(Tyr) in a two-step reaction: tyrosine is first activated by ATP to form Tyr-AMP and then transferred to the acceptor end of tRNA(Tyr). This chain is Tyrosine--tRNA ligase, found in Caulobacter vibrioides (strain ATCC 19089 / CIP 103742 / CB 15) (Caulobacter crescentus).